A 672-amino-acid chain; its full sequence is uncharacterized protein (672 aa).

The protein belongs to the MG032/MG096/MG288 family.

This is an uncharacterized protein from Mycoplasma pneumoniae (strain ATCC 29342 / M129 / Subtype 1) (Mycoplasmoides pneumoniae).